A 566-amino-acid polypeptide reads, in one-letter code: Oxygen-dependent choline dehydrogenase (566 aa).

Residue 7–36 (DYIICGAGSAGNVLATRLTEDPDVTVLLLE) participates in FAD binding. The disordered stretch occupies residues 180-202 (NGYQQEGFGPMDRTVTPKGRRAS). Histidine 474 acts as the Proton acceptor in catalysis.

The protein belongs to the GMC oxidoreductase family. The cofactor is FAD.

It catalyses the reaction choline + A = betaine aldehyde + AH2. The catalysed reaction is betaine aldehyde + NAD(+) + H2O = glycine betaine + NADH + 2 H(+). The protein operates within amine and polyamine biosynthesis; betaine biosynthesis via choline pathway; betaine aldehyde from choline (cytochrome c reductase route): step 1/1. Functionally, involved in the biosynthesis of the osmoprotectant glycine betaine. Catalyzes the oxidation of choline to betaine aldehyde and betaine aldehyde to glycine betaine at the same rate. This Burkholderia lata (strain ATCC 17760 / DSM 23089 / LMG 22485 / NCIMB 9086 / R18194 / 383) protein is Oxygen-dependent choline dehydrogenase.